A 484-amino-acid chain; its full sequence is Pheophytinase, chloroplastic (484 aa).

Residues 1–47 (MEIISLNVVPQCSVVTWSSKLATKRLVPNRSSLLFSGVKKSRLVIRS) constitute a chloroplast transit peptide.

Belongs to the AB hydrolase superfamily. As to quaternary structure, interacts with HCAR, RCCR, PAO and the LHCII complex. Part of a SGR1-CCE-LHCII complex, which acts in chlorophyll breakdown.

The protein localises to the plastid. It localises to the chloroplast thylakoid membrane. Its subcellular location is the chloroplast stroma. Functionally, alpha/beta hydrolase dephytylating specifically the Mg-free chlorophyll pigment (pheophytin), yielding pheophorbide. No activity on chlorophyll. Belongs to the chlorophyll catabolic enzymes (CCEs). The sequence is that of Pheophytinase, chloroplastic (PPH) from Arabidopsis thaliana (Mouse-ear cress).